A 46-amino-acid chain; its full sequence is GIFSKLAGKKLKNLLISGLKNVGKEVGMDVVRTGIDIAGCKIKGEC.

A disulfide bridge links Cys-40 with Cys-46.

This sequence belongs to the frog skin active peptide (FSAP) family. Esculentin subfamily. Expressed by the skin glands.

The protein localises to the secreted. Its function is as follows. Antimicrobial peptide. Stimulates insulin secretion by BRIN-BD11 cells in vitro. Shows hemolytic activity. The sequence is that of Esculentin-1a/b from Pelophylax ridibundus (Marsh frog).